Here is a 306-residue protein sequence, read N- to C-terminus: Oxygen-dependent coproporphyrinogen-III oxidase (306 aa).

Substrate is bound at residue Ser99. Residues His103 and His113 each coordinate a divalent metal cation. His113 serves as the catalytic Proton donor. 115–117 (NVR) contacts substrate. His152 and His182 together coordinate a divalent metal cation. Residues 247-282 (YVEFNLVFDRGTLFGLQSGGRTESILMSMPPVANWR) form an important for dimerization region. 265–267 (GGR) contacts substrate.

This sequence belongs to the aerobic coproporphyrinogen-III oxidase family. As to quaternary structure, homodimer. The cofactor is a divalent metal cation.

The protein resides in the cytoplasm. The enzyme catalyses coproporphyrinogen III + O2 + 2 H(+) = protoporphyrinogen IX + 2 CO2 + 2 H2O. Its pathway is porphyrin-containing compound metabolism; protoporphyrin-IX biosynthesis; protoporphyrinogen-IX from coproporphyrinogen-III (O2 route): step 1/1. In terms of biological role, involved in the heme biosynthesis. Catalyzes the aerobic oxidative decarboxylation of propionate groups of rings A and B of coproporphyrinogen-III to yield the vinyl groups in protoporphyrinogen-IX. The polypeptide is Oxygen-dependent coproporphyrinogen-III oxidase (Burkholderia ambifaria (strain MC40-6)).